We begin with the raw amino-acid sequence, 361 residues long: Cytochrome c peroxidase, mitochondrial (361 aa).

Residues 1-41 constitute a mitochondrion transit peptide; the sequence is MASAARSASRAFLRSSLRPAVRSSRFALPTQGLRVASRRGY. The Proton acceptor role is filled by H122. H245 contacts heme b. W261 acts as the Tryptophan radical intermediate in catalysis.

It belongs to the peroxidase family. Cytochrome c peroxidase subfamily. Forms a one-to-one complex with cytochrome c. The cofactor is heme b.

It localises to the mitochondrion matrix. It is found in the mitochondrion intermembrane space. The enzyme catalyses 2 Fe(II)-[cytochrome c] + H2O2 + 2 H(+) = 2 Fe(III)-[cytochrome c] + 2 H2O. Functionally, destroys radicals which are normally produced within the cells and which are toxic to biological systems. The sequence is that of Cytochrome c peroxidase, mitochondrial (ccp1) from Emericella nidulans (strain FGSC A4 / ATCC 38163 / CBS 112.46 / NRRL 194 / M139) (Aspergillus nidulans).